The chain runs to 128 residues: Glycine cleavage system H protein (128 aa).

Positions 24 to 106 (VFCVGITDHA…YDEGWLFRIR (83 aa)) constitute a Lipoyl-binding domain. Position 65 is an N6-lipoyllysine (Lys65).

The protein belongs to the GcvH family. As to quaternary structure, the glycine cleavage system is composed of four proteins: P, T, L and H. (R)-lipoate is required as a cofactor.

Its function is as follows. The glycine cleavage system catalyzes the degradation of glycine. The H protein shuttles the methylamine group of glycine from the P protein to the T protein. This Edwardsiella ictaluri (strain 93-146) protein is Glycine cleavage system H protein.